The sequence spans 343 residues: MKTHERAANLALAGLSLAPLVVKVEPNVNVILTACLAVYVGCYRSVKPTPPSETMSKEHAMRFPLVGSAMLLSLFLLFKFLSKDLVNAVLTAYFFILGIAALCATLLPSIKRFLPKEWNDNAIVWCAPFFHSLSVEFTKSQVVASIPGFFFCIWYAAKKHWLANNVLGISFCIQGIEMLSLGSFKTGAILLAGLFFYDIFWVFFTPVMVSVAKSFDAPIKLLFPTGDAARPFSMLGLGDIVIPGIFVALALRFDVSRGIKNRYFNSAFLGYTVGLTVTIIVMNWFQAAQPALLYIVPGVIGFVAVHCLWNGEVKPLLEYNESKAEEEDAVEEDTDSKQNKKEE.

The Lumenal segment spans residues 1–19 (MKTHERAANLALAGLSLAP). A helical membrane pass occupies residues 20–40 (LVVKVEPNVNVILTACLAVYV). Residues 41-62 (GCYRSVKPTPPSETMSKEHAMR) lie on the Cytoplasmic side of the membrane. The helical transmembrane segment at 63–83 (FPLVGSAMLLSLFLLFKFLSK) threads the bilayer. Over 84-87 (DLVN) the chain is Lumenal. The helical transmembrane segment at 88–108 (AVLTAYFFILGIAALCATLLP) threads the bilayer. The Cytoplasmic portion of the chain corresponds to 109-136 (SIKRFLPKEWNDNAIVWCAPFFHSLSVE). The chain crosses the membrane as a helical span at residues 137 to 157 (FTKSQVVASIPGFFFCIWYAA). Over 158–160 (KKH) the chain is Lumenal. The helical transmembrane segment at 161–181 (WLANNVLGISFCIQGIEMLSL) threads the bilayer. Residues 182–188 (GSFKTGA) are Cytoplasmic-facing. Residues 189–209 (ILLAGLFFYDIFWVFFTPVMV) form a helical membrane-spanning segment. The active site involves D198. Topologically, residues 210-230 (SVAKSFDAPIKLLFPTGDAAR) are lumenal. The chain crosses the membrane as a helical span at residues 231–251 (PFSMLGLGDIVIPGIFVALAL). Residue D239 is part of the active site. Over 252–266 (RFDVSRGIKNRYFNS) the chain is Cytoplasmic. Residues 267-287 (AFLGYTVGLTVTIIVMNWFQA) form a helical membrane-spanning segment. Residues 288 to 290 (AQP) are Lumenal-facing. The PAL signature appears at 290 to 292 (PAL). Residues 291-311 (ALLYIVPGVIGFVAVHCLWNG) form a helical membrane-spanning segment. The Cytoplasmic portion of the chain corresponds to 312–343 (EVKPLLEYNESKAEEEDAVEEDTDSKQNKKEE). The disordered stretch occupies residues 322 to 343 (SKAEEEDAVEEDTDSKQNKKEE). Over residues 324-334 (AEEEDAVEEDT) the composition is skewed to acidic residues. An Endoplasmic reticulum targeting signal motif is present at residues 340 to 343 (KKEE).

This sequence belongs to the peptidase A22B family. As to expression, ubiquitous.

The protein localises to the endoplasmic reticulum membrane. Intramembrane-cleaving aspartic protease (I-CLiP) that cleaves type II membrane signal peptides in the hydrophobic plane of the membrane. Catalyzes intramembrane proteolysis of some signal peptides after they have been cleaved from a preprotein, resulting in the release of the fragment from the ER membrane into the cytoplasm. The polypeptide is Signal peptide peptidase 1 (SPP1) (Oryza sativa subsp. japonica (Rice)).